We begin with the raw amino-acid sequence, 497 residues long: Protein DETOXIFICATION 25 (497 aa).

A run of 12 helical transmembrane segments spans residues 43-63 (LPST…QAFI), 70-90 (GLAA…GIMA), 121-141 (IVDT…GPIL), 157-177 (IYPW…MQMY), 186-206 (IIGI…WWCV), 216-236 (ALLG…VYVF), 261-281 (LSIS…IIVL), 291-311 (IAIS…NICF), 339-359 (VVLV…LAFG), 381-401 (IVLS…GVAI), 416-436 (SYYA…NFGI), and 438-458 (GLWS…CYVI).

The protein belongs to the multi antimicrobial extrusion (MATE) (TC 2.A.66.1) family.

The protein resides in the membrane. This Arabidopsis thaliana (Mouse-ear cress) protein is Protein DETOXIFICATION 25.